The chain runs to 439 residues: Serine hydroxymethyltransferase (439 aa).

Residues Leu-134 and 138 to 140 each bind (6S)-5,6,7,8-tetrahydrofolate; that span reads GHL. Lys-243 carries the N6-(pyridoxal phosphate)lysine modification.

Belongs to the SHMT family. Homodimer. The cofactor is pyridoxal 5'-phosphate.

It is found in the cytoplasm. It carries out the reaction (6R)-5,10-methylene-5,6,7,8-tetrahydrofolate + glycine + H2O = (6S)-5,6,7,8-tetrahydrofolate + L-serine. Its pathway is one-carbon metabolism; tetrahydrofolate interconversion. The protein operates within amino-acid biosynthesis; glycine biosynthesis; glycine from L-serine: step 1/1. Catalyzes the reversible interconversion of serine and glycine with tetrahydrofolate (THF) serving as the one-carbon carrier. This reaction serves as the major source of one-carbon groups required for the biosynthesis of purines, thymidylate, methionine, and other important biomolecules. Also exhibits THF-independent aldolase activity toward beta-hydroxyamino acids, producing glycine and aldehydes, via a retro-aldol mechanism. This Brucella anthropi (strain ATCC 49188 / DSM 6882 / CCUG 24695 / JCM 21032 / LMG 3331 / NBRC 15819 / NCTC 12168 / Alc 37) (Ochrobactrum anthropi) protein is Serine hydroxymethyltransferase.